The primary structure comprises 261 residues: Kallikrein-1E2 (261 aa).

Positions 1–17 (MWFLVLCLDLSLGETGA) are cleaved as a signal peptide. A propeptide spans 18-24 (LPPIQSR) (activation peptide). Positions 25–258 (IIGGWECEKH…HLKWIKETIE (234 aa)) constitute a Peptidase S1 domain. Disulfide bonds link C31–C173, C50–C66, C152–C219, C184–C198, and C209–C234. H65 (charge relay system) is an active-site residue. N-linked (GlcNAc...) asparagine glycosylation is present at N79. D120 serves as the catalytic Charge relay system. S213 (charge relay system) is an active-site residue.

The protein belongs to the peptidase S1 family. Kallikrein subfamily. In terms of tissue distribution, detected in prostate and semen.

It localises to the secreted. The enzyme catalyses Preferential cleavage of Arg-|-Xaa bonds in small molecule substrates. Highly selective action to release kallidin (lysyl-bradykinin) from kininogen involves hydrolysis of Met-|-Xaa or Leu-|-Xaa.. Its function is as follows. Glandular kallikreins cleave Met-Lys and Arg-Ser bonds in kininogen to release Lys-bradykinin. The sequence is that of Kallikrein-1E2 (KLK1E2) from Equus caballus (Horse).